The sequence spans 317 residues: MGEVQREKVAVIIGPTAVGKTKLSIDLAKALNGEIISGDSMQIYRTMDIGTAKVTKAEMDGIPHYMIDIKNPEDSFSVAEFQERVRKHIREITERGKLPIIVGGTGLYIQSVLFDYQFTDDAGDVIYREQMEKLALERGVEYVHKKLQEVDPESAERIHANNVRRVIRALEIFHMTGEKMSDQIEKQEKELLYDVSLIGLTMDREMLYDRINLRVDLMMEQGLLEEVEGLYNRGIRDCQSIQAIGYKEIYDYFENRASLEDAVSQLKTNSRRYAKRQLTWFRNKMDVTWFDVTDGEKTSEILRYIEGKLQVKSNNSK.

Gly14–Thr21 contacts ATP. Position 16-21 (Thr16–Thr21) interacts with substrate. The interval Asp39–Gln42 is interaction with substrate tRNA.

The protein belongs to the IPP transferase family. As to quaternary structure, monomer. Mg(2+) is required as a cofactor.

It catalyses the reaction adenosine(37) in tRNA + dimethylallyl diphosphate = N(6)-dimethylallyladenosine(37) in tRNA + diphosphate. Functionally, catalyzes the transfer of a dimethylallyl group onto the adenine at position 37 in tRNAs that read codons beginning with uridine, leading to the formation of N6-(dimethylallyl)adenosine (i(6)A). The chain is tRNA dimethylallyltransferase from Bacillus cereus (strain B4264).